We begin with the raw amino-acid sequence, 261 residues long: MAVISMKQLLEAGVHFGHQTRRWNPKMKKYIFTERNGIYIIDLQKTVKLVDAAYDYMKNVAEEGGVALFVGTKKQAQEAIKDEAIRAGQYYVNHRWLGGTLTNWDTIQKRIARLKKINAMEEDGTFEVLPKKEVAGLNKERERLEKFLGGIADMPRIPDVMYIVDPRKERIAVQEAHKLNIPIVAMVDTNCDPDEIDVVIPSNDDAIRAVKLITAKMADAFIEGNQGEDQATEELFVEETPEATSIEEIVDVVEGNNESAE.

The protein belongs to the universal ribosomal protein uS2 family.

This Enterococcus faecalis (strain ATCC 700802 / V583) protein is Small ribosomal subunit protein uS2.